The primary structure comprises 397 residues: Probable peptidoglycan glycosyltransferase FtsW (397 aa).

At 1–30 (MYGLEMLEKIKLEYDKWACLTPKNSLYDRT) the chain is on the cytoplasmic side. The chain crosses the membrane as a helical span at residues 31 to 51 (LVWLFLSLLMIGFIMVTSASI). At 52–61 (PVSTRLNNDP) the chain is on the periplasmic side. Residues 62-82 (FHFAIRDSIYLACSLLAFAFV) traverse the membrane as a helical segment. Over 83–94 (VKIPMRNWEKYN) the chain is Cytoplasmic. A helical membrane pass occupies residues 95 to 115 (VPLFLLSLLFLASVLIFGRSV). The Periplasmic segment spans residues 116–126 (NGSIRWIQLGP). The helical transmembrane segment at 127-146 (INFQPAELSKLAIICYFSSF) threads the bilayer. The Cytoplasmic portion of the chain corresponds to 147–158 (YVRKYDEMRNRS). A run of 2 helical transmembrane segments spans residues 159–179 (ASVI…LLQP) and 180–200 (DLGS…IMGA). A topological domain (cytoplasmic) is located at residue lysine 201. A helical transmembrane segment spans residues 202–222 (VMQFLLLIVTASVSFILLVLT). At 223-280 (SEYRLKRVTSFLDPFADAYGDGFQLSNAQMAFGQGQLWGQGLGNSVQKLEYLPEAHTD) the chain is on the periplasmic side. The chain crosses the membrane as a helical span at residues 281–301 (FVMAVVAEEFGFIGIIFMVVL). At 302 to 325 (LLCLSFRAIKISRDALKLEARFRG) the chain is on the cytoplasmic side. Residues 326 to 346 (FFAFGVAIWVFLQGSVNLGVA) form a helical membrane-spanning segment. At 347–356 (SGALPTKGLT) the chain is on the periplasmic side. Residues 357–377 (FPLVSYGGSSLVIMSVAIAIL) form a helical membrane-spanning segment. Residues 378–397 (LRIDYENRLTRVGHAQIKEP) lie on the Cytoplasmic side of the membrane.

It belongs to the SEDS family. FtsW subfamily.

It localises to the cell inner membrane. It catalyses the reaction [GlcNAc-(1-&gt;4)-Mur2Ac(oyl-L-Ala-gamma-D-Glu-L-Lys-D-Ala-D-Ala)](n)-di-trans,octa-cis-undecaprenyl diphosphate + beta-D-GlcNAc-(1-&gt;4)-Mur2Ac(oyl-L-Ala-gamma-D-Glu-L-Lys-D-Ala-D-Ala)-di-trans,octa-cis-undecaprenyl diphosphate = [GlcNAc-(1-&gt;4)-Mur2Ac(oyl-L-Ala-gamma-D-Glu-L-Lys-D-Ala-D-Ala)](n+1)-di-trans,octa-cis-undecaprenyl diphosphate + di-trans,octa-cis-undecaprenyl diphosphate + H(+). It participates in cell wall biogenesis; peptidoglycan biosynthesis. Functionally, peptidoglycan polymerase that is essential for cell division. In Haemophilus ducreyi (strain 35000HP / ATCC 700724), this protein is Probable peptidoglycan glycosyltransferase FtsW.